A 466-amino-acid polypeptide reads, in one-letter code: Coagulation factor VII (466 aa).

The N-terminal stretch at 1 to 20 is a signal peptide; it reads MVSQALRLLCLLLGLQGCLA. The propeptide occupies 21–60; sequence AGGVAEASGGETRDMPWKPGPHRVFITQEEAHGVLHRRRR. Residues 61–105 enclose the Gla domain; the sequence is ANAFLEELRPGSLERECKEEQCSFEEAREIFKDLERTKLFWISYS. Glu-66, Glu-67, Glu-74, Glu-76, Glu-79, Glu-80, Glu-85, Glu-86, Glu-89, and Glu-95 each carry 4-carboxyglutamate. A disulfide bridge connects residues Cys-77 and Cys-82. Residues 106–142 form the EGF-like 1; calcium-binding domain; it reads DGDQCASSPCQNGGSCKDQLQSYICFCLPAFEGRNCE. Cystine bridges form between Cys-110/Cys-121, Cys-115/Cys-130, Cys-132/Cys-141, Cys-151/Cys-162, Cys-158/Cys-172, Cys-174/Cys-187, Cys-195/Cys-322, Cys-219/Cys-224, Cys-238/Cys-254, and Cys-370/Cys-389. Ser-112 carries an O-linked (Glc...) serine; alternate glycan. Ser-112 is a glycosylation site (O-linked (Xyl...) serine; alternate). The O-linked (Fuc) serine glycan is linked to Ser-120. Asp-123 carries the post-translational modification (3R)-3-hydroxyaspartate. Positions 147-188 constitute an EGF-like 2 domain; sequence DQLICVNENGGCEQYCSDHTGTKRSCRCHEGYSLLADGVSCT. The N-linked (GlcNAc...) asparagine glycan is linked to Asn-205. The Peptidase S1 domain maps to 213–452; it reads IVGGKVCPKG…YIEWLQKLMR (240 aa). Catalysis depends on charge relay system residues His-253 and Asp-302. N-linked (GlcNAc...) asparagine glycosylation occurs at Asn-382. Position 398 (Asp-398) interacts with substrate. Cys-400 and Cys-428 are oxidised to a cystine. Ser-404 (charge relay system) is an active-site residue.

Belongs to the peptidase S1 family. Heterodimer of a light chain and a heavy chain linked by a disulfide bond. Post-translationally, the vitamin K-dependent, enzymatic carboxylation of some glutamate residues allows the modified protein to bind calcium. In terms of processing, the iron and 2-oxoglutarate dependent 3-hydroxylation of aspartate and asparagine is (R) stereospecific within EGF domains. O-glycosylated. O-fucosylated by POFUT1 on a conserved serine or threonine residue found in the consensus sequence C2-X(4,5)-[S/T]-C3 of EGF domains, where C2 and C3 are the second and third conserved cysteines. Post-translationally, can be either O-glucosylated or O-xylosylated at Ser-112 by POGLUT1.

Its subcellular location is the secreted. The catalysed reaction is Selective cleavage of Arg-|-Ile bond in factor X to form factor Xa.. Its function is as follows. Initiates the extrinsic pathway of blood coagulation. Serine protease that circulates in the blood in a zymogen form. Factor VII is converted to factor VIIa by factor Xa, factor XIIa, factor IXa, or thrombin by minor proteolysis. In the presence of tissue factor and calcium ions, factor VIIa then converts factor X to factor Xa by limited proteolysis. Factor VIIa also converts factor IX to factor IXa in the presence of tissue factor and calcium. This Pan paniscus (Pygmy chimpanzee) protein is Coagulation factor VII (F7).